Consider the following 65-residue polypeptide: Large ribosomal subunit protein uL29 (65 aa).

It belongs to the universal ribosomal protein uL29 family.

The chain is Large ribosomal subunit protein uL29 from Lactobacillus helveticus (strain DPC 4571).